The primary structure comprises 234 residues: Adenosine 5'-phosphosulfate reductase (234 aa).

Cys120, Cys121, Cys203, and Cys206 together coordinate [4Fe-4S] cluster. The active-site Nucleophile; cysteine thiosulfonate intermediate is the Cys229.

It belongs to the PAPS reductase family. CysH subfamily. [4Fe-4S] cluster is required as a cofactor.

The protein resides in the cytoplasm. The enzyme catalyses [thioredoxin]-disulfide + sulfite + AMP + 2 H(+) = adenosine 5'-phosphosulfate + [thioredoxin]-dithiol. It functions in the pathway sulfur metabolism; hydrogen sulfide biosynthesis; sulfite from sulfate. Catalyzes the formation of sulfite from adenosine 5'-phosphosulfate (APS) using thioredoxin as an electron donor. In Bacillus cereus (strain Q1), this protein is Adenosine 5'-phosphosulfate reductase.